Reading from the N-terminus, the 271-residue chain is Aquaporin-11 (271 aa).

At 1 to 14 the chain is on the cytoplasmic side; sequence MSALLGLRPEVQDT. The chain crosses the membrane as a helical span at residues 15–35; it reads CISLGLMLLFVLFVGLARVIA. The Lumenal portion of the chain corresponds to 36 to 41; it reads RQQLHR. The chain crosses the membrane as a helical span at residues 42-62; sequence PVVHAFVLEFLATFQLCCCTH. Residues 63–76 lie on the Cytoplasmic side of the membrane; that stretch reads ELQVLSEQDSAHPT. A helical membrane pass occupies residues 77-97; that stretch reads WTLTLIYFFSLVHGLTLVGTA. The Lumenal portion of the chain corresponds to 98–166; sequence SNPCGVMMQM…NPIHTDMSKA (69 aa). The NPC motif lies at 99–101; that stretch reads NPC. The helical transmembrane segment at 167–187 threads the bilayer; the sequence is IIIEAICSFIFHSALLHFQEV. Residues 188-194 lie on the Cytoplasmic side of the membrane; that stretch reads RTKLRIH. Residues 195–215 form a helical membrane-spanning segment; it reads LLAALITFLAYAGGSLTGALF. The NPA signature appears at 216–218; it reads NPA. The Lumenal portion of the chain corresponds to 216-234; sequence NPALALSLHFPCFDELFYK. The helical transmembrane segment at 235 to 255 threads the bilayer; sequence FFVVYWLAPSVGVLMMILMFS. The Cytoplasmic portion of the chain corresponds to 256-271; the sequence is FFLPWLHNNQMTNKKE.

Belongs to the MIP/aquaporin (TC 1.A.8) family. AQP11/AQP12 subfamily. Homodimer; disulfide-linked. Homotetramer. Can also form homomultimer. Post-translationally, not glycosylated. Highly expressed in the S1 proximal tubule segment,. Expressed in the testis, kidney, and liver. Weakly expressed in the heart, brain, and muscle. Highly expressed in the testis. Expressed in the proximal tubule of the cortex of 8-day-old mouse kidney. Expressed in retina specifically at retinal Mueller glial cells. Expressed in brain. Expressed abundantly at the choroid plexus but also expressed weakly in the parenchyma. Expressed at the capillary endothelium in the cerebral white matter. Expressed in adult testis, in the elongated spermatids (ES) and in residual bodies inside Sertoli cells.

It localises to the endoplasmic reticulum membrane. The protein localises to the cytoplasmic vesicle membrane. Its subcellular location is the cell membrane. It catalyses the reaction H2O(in) = H2O(out). The catalysed reaction is glycerol(in) = glycerol(out). The enzyme catalyses H2O2(out) = H2O2(in). Functionally, channel protein that facilitates the transport of water, glycerol and hydrogen peroxide across membrane of cell or organelles guaranteeing intracellular homeostasis in several organes like liver, kidney and brain. In situation of stress, participates in endoplasmic reticulum (ER) homeostasis by regulating redox homeostasis through the transport of hydrogen peroxide across the endoplasmic reticulum membrane thereby regulating the oxidative stress through the NADPH oxidase 2 pathway. Plays a role by maintaining an environment suitable for translation or protein foldings in the ER lumen namely by participating in the PKD1 glycosylation processing resulting in regulation of PKD1 membrane trafficking thereby preventing the accumulation of unfolding protein in ER. Plays a role in the proximal tubule function by regulating its endosomal acidification. May play a role in postnatal kidney development. The protein is Aquaporin-11 of Mus musculus (Mouse).